Consider the following 264-residue polypeptide: S-adenosylmethionine decarboxylase proenzyme (264 aa).

The Schiff-base intermediate with substrate; via pyruvic acid role is filled by Ser-112. Ser-112 bears the Pyruvic acid (Ser); by autocatalysis mark. His-117 serves as the catalytic Proton acceptor; for processing activity. The active-site Proton donor; for catalytic activity is Cys-140.

This sequence belongs to the prokaryotic AdoMetDC family. Type 2 subfamily. Heterooctamer of four alpha and four beta chains arranged as a tetramer of alpha/beta heterodimers. The cofactor is pyruvate. Is synthesized initially as an inactive proenzyme. Formation of the active enzyme involves a self-maturation process in which the active site pyruvoyl group is generated from an internal serine residue via an autocatalytic post-translational modification. Two non-identical subunits are generated from the proenzyme in this reaction, and the pyruvate is formed at the N-terminus of the alpha chain, which is derived from the carboxyl end of the proenzyme. The post-translation cleavage follows an unusual pathway, termed non-hydrolytic serinolysis, in which the side chain hydroxyl group of the serine supplies its oxygen atom to form the C-terminus of the beta chain, while the remainder of the serine residue undergoes an oxidative deamination to produce ammonia and the pyruvoyl group blocking the N-terminus of the alpha chain.

It carries out the reaction S-adenosyl-L-methionine + H(+) = S-adenosyl 3-(methylsulfanyl)propylamine + CO2. The protein operates within amine and polyamine biosynthesis; S-adenosylmethioninamine biosynthesis; S-adenosylmethioninamine from S-adenosyl-L-methionine: step 1/1. Its function is as follows. Catalyzes the decarboxylation of S-adenosylmethionine to S-adenosylmethioninamine (dcAdoMet), the propylamine donor required for the synthesis of the polyamines spermine and spermidine from the diamine putrescine. The polypeptide is S-adenosylmethionine decarboxylase proenzyme (Salmonella choleraesuis (strain SC-B67)).